Here is a 295-residue protein sequence, read N- to C-terminus: Zinc finger CCCH domain-containing protein 44 (295 aa).

Residues 1-31 (MEAGGGKRAAPEGTNGAAKRARASESSQVGV) form a disordered region. 2 consecutive C3H1-type zinc fingers follow at residues 32 to 60 (GSKL…HNFP) and 98 to 126 (SVKT…HGER). Positions 166–230 (SATAKISVDA…DQIKHASAMV (65 aa)) constitute a KH domain. Residues 259 to 286 (NFKTKLCENFNKGSCTFGDRCHFAHGES) form a C3H1-type 3 zinc finger.

This is Zinc finger CCCH domain-containing protein 44 from Oryza sativa subsp. japonica (Rice).